The chain runs to 151 residues: Transcriptional repressor NrdR (151 aa).

A zinc finger spans residues 3-34 (CPFCSHPDTQVVETREAEDGGFIRRRRQCGGC). The 91-residue stretch at 49–139 (PAIVKKDGRR…VYRSFEDVDD (91 aa)) folds into the ATP-cone domain.

This sequence belongs to the NrdR family. Zn(2+) serves as cofactor.

Functionally, negatively regulates transcription of bacterial ribonucleotide reductase nrd genes and operons by binding to NrdR-boxes. The protein is Transcriptional repressor NrdR of Delftia acidovorans (strain DSM 14801 / SPH-1).